Reading from the N-terminus, the 93-residue chain is Pyrimidine/purine nucleoside phosphorylase (93 aa).

Belongs to the nucleoside phosphorylase PpnP family.

It carries out the reaction a purine D-ribonucleoside + phosphate = a purine nucleobase + alpha-D-ribose 1-phosphate. The enzyme catalyses adenosine + phosphate = alpha-D-ribose 1-phosphate + adenine. The catalysed reaction is cytidine + phosphate = cytosine + alpha-D-ribose 1-phosphate. It catalyses the reaction guanosine + phosphate = alpha-D-ribose 1-phosphate + guanine. It carries out the reaction inosine + phosphate = alpha-D-ribose 1-phosphate + hypoxanthine. The enzyme catalyses thymidine + phosphate = 2-deoxy-alpha-D-ribose 1-phosphate + thymine. The catalysed reaction is uridine + phosphate = alpha-D-ribose 1-phosphate + uracil. It catalyses the reaction xanthosine + phosphate = alpha-D-ribose 1-phosphate + xanthine. In terms of biological role, catalyzes the phosphorolysis of diverse nucleosides, yielding D-ribose 1-phosphate and the respective free bases. Can use uridine, adenosine, guanosine, cytidine, thymidine, inosine and xanthosine as substrates. Also catalyzes the reverse reactions. This Pseudomonas aeruginosa (strain LESB58) protein is Pyrimidine/purine nucleoside phosphorylase.